Consider the following 129-residue polypeptide: Large ribosomal subunit protein bL17 (129 aa).

The protein belongs to the bacterial ribosomal protein bL17 family. As to quaternary structure, part of the 50S ribosomal subunit. Contacts protein L32.

This Polynucleobacter asymbioticus (strain DSM 18221 / CIP 109841 / QLW-P1DMWA-1) (Polynucleobacter necessarius subsp. asymbioticus) protein is Large ribosomal subunit protein bL17.